The primary structure comprises 532 residues: Protein FAM227B (532 aa).

Residues Asp432–Asn482 adopt a coiled-coil conformation. The segment at Lys494–Gly532 is disordered. Low complexity predominate over residues Ser500–Ser523.

It belongs to the FAM227 family.

The protein is Protein FAM227B (Fam227b) of Mus musculus (Mouse).